A 950-amino-acid polypeptide reads, in one-letter code: MSHNHMMNNQQQHAAMINPGAVASVSGAQVQQRSMMSQQRGGSHAINSSKSPYQLQTSSISQFSHLQQQQQQQQQQQLVNNYHKQKQMSPDITSHQFSSSTGGGMPTQNGNYQSMSGSSIHTSMGLDNGQLSLQHQHHQYSSQPAQALQTSVQQHHYQSQQMTQQQQQAAQQQPQQQYQSFQQQHHLIQQQQQQQQIHTQQQQQLPQQAMHQQQQHLQLHQHLQQRSLNQQQQQQQRYQKQQQQPQPKQILQHSPTSGKSLSSAPHGTSVQPSTLLNHHQHNMAAPQVTPVTNGESAGEDTSPKDSPQAPKTSGRDSVHVSDNEESASNASEMQQSLANTKEKTPMCLINELARFNKMSHQYTLVDEQGPAHKKTFYVKLKLGDEEYSASGESIKKAQHAAAAIALVETKCPHPPPKPARLGCCDLEKSADGNITPTVELNALAMKRGEPALYKSIEPQQPPYYHQPNMDFRGLYNQRYHQYMRASRDPRYRGNGVLWPLRYHYPRMNRAFYVSLRVGHREFIGDGPTRQAARHNAAQKALRILKNLPVQSGEKKSEEQADEAAEDACEEDVDDSLKSEISLVHEIALRRNMVVQFEVIRETGPPHMKNFLTRCTVADMVTEGEGNSKKTSKKKAAELMLEELRKLPPLATPAFPRPKSKIQMNKKKNRNLIKSELQQQKADPNYGVGINPISRLIQIMQAQKKKEPVYTLVTERGLPRRREFIVQVEVEDKTCPGSGPNKKLAKRAAAEAMLQLLGYTKPSPQPTKSSFKNPSTGEAGQTNGDKKVTFVGGDSPGDGDDKVSSGSNQQRVPGLLHLPSKSSASSSGNQHTASKESLVNLASILKPNLRPEIQLRELCKAMDCQLEIDDFTKKRTSGTEHITRITIGSENPQSFHGSNTSLESSRDMAALDALKVLVARAKDIHPGGDGPQVKKDVLARSGSGMKKDFSK.

Disordered regions lie at residues 25-168 (VSGA…QQQQ), 202-274 (QQQL…QPST), and 288-342 (VTPV…NTKE). Residues 31-43 (QQRSMMSQQRGGS) show a composition bias toward low complexity. Positions 45 to 66 (AINSSKSPYQLQTSSISQFSHL) are enriched in polar residues. Residues 67-77 (QQQQQQQQQQQ) show a composition bias toward low complexity. The segment covering 78–122 (LVNNYHKQKQMSPDITSHQFSSSTGGGMPTQNGNYQSMSGSSIHT) has biased composition (polar residues). 3 stretches are compositionally biased toward low complexity: residues 130-143 (QLSLQHQHHQYSSQ), 153-168 (QQHHYQSQQMTQQQQQ), and 202-253 (QQQL…ILQH). A compositionally biased stretch (polar residues) spans 254-274 (SPTSGKSLSSAPHGTSVQPST). Basic and acidic residues predominate over residues 313-322 (SGRDSVHVSD). DRBM domains lie at 344 to 411 (TPMC…ETKC), 435 to 546 (TPTV…ILKN), 578 to 645 (SEIS…ELRK), and 690 to 758 (NPIS…LLGY). 2 disordered regions span residues 758-833 (YTKP…HTAS) and 922-950 (DIHPGGDGPQVKKDVLARSGSGMKKDFSK). Polar residues predominate over residues 765–782 (PTKSSFKNPSTGEAGQTN). Residues 922 to 937 (DIHPGGDGPQVKKDVL) are compositionally biased toward basic and acidic residues.

As to expression, strongly expressed in nervous tissue (at protein level).

The protein resides in the perikaryon. It localises to the cell projection. Its function is as follows. RNA-binding protein which is required for syntaxin location in sensory neurons during long-term synaptic facilitation. Binds to syntaxin mRNA and is required to maintain its accumulation at the axon hillock following neuronal stimulation and at the opposite pole in stable unstimulated sensory neurons. This is Double-stranded RNA-binding protein Staufen homolog from Aplysia californica (California sea hare).